We begin with the raw amino-acid sequence, 262 residues long: Nurim (262 aa).

The Nuclear segment spans residues M1–A4. A helical transmembrane segment spans residues L5 to F28. The Perinuclear space portion of the chain corresponds to T29–S58. Residues I59 to M80 form a helical membrane-spanning segment. Topologically, residues A81–Q97 are nuclear. Residues R98–R114 traverse the membrane as a helical segment. The Perinuclear space portion of the chain corresponds to Y115 to W133. Residues A134–L164 form a helical membrane-spanning segment. At M165–L191 the chain is on the nuclear side. Residues F192–V210 traverse the membrane as a helical segment. Residues P211–D216 are Perinuclear space-facing. A helical transmembrane segment spans residues R217 to L234. Residues D235–E262 lie on the Nuclear side of the membrane.

It belongs to the nurim family.

Its subcellular location is the nucleus inner membrane. This chain is Nurim (NRM), found in Bos taurus (Bovine).